Reading from the N-terminus, the 95-residue chain is Integration host factor subunit beta (95 aa).

This sequence belongs to the bacterial histone-like protein family. In terms of assembly, heterodimer of an alpha and a beta chain.

Functionally, this protein is one of the two subunits of integration host factor, a specific DNA-binding protein that functions in genetic recombination as well as in transcriptional and translational control. In Shewanella amazonensis (strain ATCC BAA-1098 / SB2B), this protein is Integration host factor subunit beta.